The chain runs to 128 residues: MNFSVIFAVGIGGFFGAISRFLIATWMQKITHSLFPVGTLTVNVLGSFIIGFLYMYFEQSINPIYKAMFITGFLGALTTFSTFSLETLLMIQDGLWIRAFLNILLNVILTISSTFAAIILFKKMYGGL.

4 helical membrane-spanning segments follow: residues 3–23 (FSVIFAVGIGGFFGAISRFLI), 34–54 (LFPVGTLTVNVLGSFIIGFLY), 69–89 (FITGFLGALTTFSTFSLETLL), and 100–120 (FLNILLNVILTISSTFAAIIL). Gly75 and Thr78 together coordinate Na(+).

Belongs to the fluoride channel Fluc/FEX (TC 1.A.43) family.

The protein localises to the cell inner membrane. It catalyses the reaction fluoride(in) = fluoride(out). Its activity is regulated as follows. Na(+) is not transported, but it plays an essential structural role and its presence is essential for fluoride channel function. Its function is as follows. Fluoride-specific ion channel. Important for reducing fluoride concentration in the cell, thus reducing its toxicity. This chain is Fluoride-specific ion channel FluC, found in Nitratiruptor sp. (strain SB155-2).